A 316-amino-acid chain; its full sequence is Probable cell division protein WhiA (316 aa).

A DNA-binding region (H-T-H motif) is located at residues 280 to 313 (SLKELGEMLEPPVGKSGVNHRLRKIEKIAEELRT).

Belongs to the WhiA family.

In terms of biological role, involved in cell division and chromosome segregation. The protein is Probable cell division protein WhiA of Clostridium perfringens (strain 13 / Type A).